The primary structure comprises 404 residues: D-galactonate dehydratase family member Ent638_1932 (404 aa).

The substrate site is built by asparagine 37 and histidine 122. The active-site Proton donor/acceptor is the tyrosine 159. Residue aspartate 212 coordinates Mg(2+). The active-site Proton donor/acceptor is histidine 214. Mg(2+)-binding residues include glutamate 238 and glutamate 264. Substrate contacts are provided by glutamate 264, arginine 285, histidine 314, aspartate 318, and glutamate 341.

Belongs to the mandelate racemase/muconate lactonizing enzyme family. GalD subfamily. It depends on Mg(2+) as a cofactor.

The catalysed reaction is D-mannonate = 2-dehydro-3-deoxy-D-gluconate + H2O. Functionally, has low D-mannonate dehydratase activity (in vitro), suggesting that this is not a physiological substrate and that it has no significant role in D-mannonate degradation in vivo. Has no detectable activity with a panel of 70 other acid sugars (in vitro). This Enterobacter sp. (strain 638) protein is D-galactonate dehydratase family member Ent638_1932.